The primary structure comprises 885 residues: Alanine--tRNA ligase (885 aa).

Positions 426-444 are enriched in basic and acidic residues; the sequence is QEQKTRARQDRREKQRGGA. Residues 426–445 form a disordered region; it reads QEQKTRARQDRREKQRGGAE. Zn(2+) is bound by residues His-568, His-572, Cys-671, and His-675.

It belongs to the class-II aminoacyl-tRNA synthetase family. Zn(2+) is required as a cofactor.

The protein resides in the cytoplasm. It catalyses the reaction tRNA(Ala) + L-alanine + ATP = L-alanyl-tRNA(Ala) + AMP + diphosphate. Its function is as follows. Catalyzes the attachment of alanine to tRNA(Ala) in a two-step reaction: alanine is first activated by ATP to form Ala-AMP and then transferred to the acceptor end of tRNA(Ala). Also edits incorrectly charged Ser-tRNA(Ala) and Gly-tRNA(Ala) via its editing domain. This is Alanine--tRNA ligase from Chlorobium phaeovibrioides (strain DSM 265 / 1930) (Prosthecochloris vibrioformis (strain DSM 265)).